A 137-amino-acid chain; its full sequence is Phosphomevalonate dehydratase small subunit (137 aa).

Serine 62 serves as the catalytic Proton acceptor.

Belongs to the AcnX type II small subunit family. In terms of assembly, heterodimer composed of a large subunit (PMDh-L) and a small subunit (PMDh-S).

It catalyses the reaction (R)-5-phosphomevalonate = (2E)-3-methyl-5-phosphooxypent-2-enoate + H2O. The protein operates within isoprenoid biosynthesis; isopentenyl diphosphate biosynthesis via mevalonate pathway. Functionally, component of a hydro-lyase that catalyzes the dehydration of mevalonate 5-phosphate (MVA5P) to form trans-anhydromevalonate 5-phosphate (tAHMP). Involved in the archaeal mevalonate (MVA) pathway, which provides fundamental precursors for isoprenoid biosynthesis, such as isopentenyl diphosphate (IPP) and dimethylallyl diphosphate (DMAPP). The polypeptide is Phosphomevalonate dehydratase small subunit (Methanothrix thermoacetophila (strain DSM 6194 / JCM 14653 / NBRC 101360 / PT) (Methanosaeta thermophila)).